The following is a 287-amino-acid chain: Diphthine methyl ester synthase (287 aa).

S-adenosyl-L-methionine contacts are provided by residues L9, D84, G87, S112 to I113, L163, V221, and H248.

This sequence belongs to the diphthine synthase family.

The protein localises to the cytoplasm. The catalysed reaction is 2-[(3S)-amino-3-carboxypropyl]-L-histidyl-[translation elongation factor 2] + 4 S-adenosyl-L-methionine = diphthine methyl ester-[translation elongation factor 2] + 4 S-adenosyl-L-homocysteine + 3 H(+). It functions in the pathway protein modification; peptidyl-diphthamide biosynthesis. In terms of biological role, S-adenosyl-L-methionine-dependent methyltransferase that catalyzes four methylations of the modified target histidine residue in translation elongation factor 2 (EF-2), to form an intermediate called diphthine methyl ester. The four successive methylation reactions represent the second step of diphthamide biosynthesis. The polypeptide is Diphthine methyl ester synthase (dph-5) (Neurospora crassa (strain ATCC 24698 / 74-OR23-1A / CBS 708.71 / DSM 1257 / FGSC 987)).